Consider the following 325-residue polypeptide: Beta-ketoacyl-[acyl-carrier-protein] synthase III (325 aa).

Residues Cys119 and His252 contribute to the active site. Positions 253-257 (QANIR) are ACP-binding. Residue Asn282 is part of the active site.

It belongs to the thiolase-like superfamily. FabH family. As to quaternary structure, homodimer.

Its subcellular location is the cytoplasm. It carries out the reaction malonyl-[ACP] + acetyl-CoA + H(+) = 3-oxobutanoyl-[ACP] + CO2 + CoA. It functions in the pathway lipid metabolism; fatty acid biosynthesis. Functionally, catalyzes the condensation reaction of fatty acid synthesis by the addition to an acyl acceptor of two carbons from malonyl-ACP. Catalyzes the first condensation reaction which initiates fatty acid synthesis and may therefore play a role in governing the total rate of fatty acid production. Possesses both acetoacetyl-ACP synthase and acetyl transacylase activities. Its substrate specificity determines the biosynthesis of branched-chain and/or straight-chain of fatty acids. The protein is Beta-ketoacyl-[acyl-carrier-protein] synthase III of Polaromonas sp. (strain JS666 / ATCC BAA-500).